The following is a 644-amino-acid chain: CTP synthase (644 aa).

Residues 300–551 enclose the Glutamine amidotransferase type-1 domain; sequence SIAIVGKYTK…LGLILASVDR (252 aa). Residues Cys-399, His-527, and Glu-529 each act as for GATase activity in the active site.

Belongs to the CTP synthase family.

It catalyses the reaction UTP + L-glutamine + ATP + H2O = CTP + L-glutamate + ADP + phosphate + 2 H(+). It functions in the pathway pyrimidine metabolism; CTP biosynthesis via de novo pathway; CTP from UDP: step 2/2. Catalyzes the ATP-dependent amination of UTP to CTP with either L-glutamine or ammonia as the source of nitrogen. Constitutes the rate-limiting enzyme in the synthesis of cytosine nucleotides. In Drosophila pseudoobscura pseudoobscura (Fruit fly), this protein is CTP synthase.